The primary structure comprises 81 residues: ATP synthase subunit c, chloroplastic (81 aa).

Transmembrane regions (helical) follow at residues 3–23 and 57–77; these read PLIS…ASIG and LAFM…LLFA.

It belongs to the ATPase C chain family. In terms of assembly, F-type ATPases have 2 components, F(1) - the catalytic core - and F(0) - the membrane proton channel. F(1) has five subunits: alpha(3), beta(3), gamma(1), delta(1), epsilon(1). F(0) has four main subunits: a(1), b(1), b'(1) and c(10-14). The alpha and beta chains form an alternating ring which encloses part of the gamma chain. F(1) is attached to F(0) by a central stalk formed by the gamma and epsilon chains, while a peripheral stalk is formed by the delta, b and b' chains.

It localises to the plastid. The protein localises to the chloroplast thylakoid membrane. In terms of biological role, f(1)F(0) ATP synthase produces ATP from ADP in the presence of a proton or sodium gradient. F-type ATPases consist of two structural domains, F(1) containing the extramembraneous catalytic core and F(0) containing the membrane proton channel, linked together by a central stalk and a peripheral stalk. During catalysis, ATP synthesis in the catalytic domain of F(1) is coupled via a rotary mechanism of the central stalk subunits to proton translocation. Its function is as follows. Key component of the F(0) channel; it plays a direct role in translocation across the membrane. A homomeric c-ring of between 10-14 subunits forms the central stalk rotor element with the F(1) delta and epsilon subunits. This is ATP synthase subunit c, chloroplastic from Gossypium barbadense (Sea Island cotton).